Here is a 357-residue protein sequence, read N- to C-terminus: Probable glutamine amidotransferase DUG3 (357 aa).

The active-site For GATase activity is the C2. The 259-residue stretch at 2–260 (CRFLIFKGKQ…PGEYRVERLD (259 aa)) folds into the Glutamine amidotransferase type-2 domain.

It belongs to the DUG3 family. Component of the GSH degradosomal complex composed of at least DUG1, DUG2 and DUG3.

The protein resides in the cytoplasm. In terms of biological role, component of the GSH degradosomal complex involved in the degradation of glutathione (GSH) and other peptides containing a gamma-glu-X bond. The protein is Probable glutamine amidotransferase DUG3 (DUG3) of Saccharomyces cerevisiae (strain ATCC 204508 / S288c) (Baker's yeast).